A 499-amino-acid chain; its full sequence is Glycerol kinase (499 aa).

Threonine 14 is a binding site for ADP. Residues threonine 14, threonine 15, and serine 16 each contribute to the ATP site. Threonine 14 is a binding site for sn-glycerol 3-phosphate. An ADP-binding site is contributed by arginine 18. 4 residues coordinate sn-glycerol 3-phosphate: arginine 84, glutamate 85, tyrosine 136, and aspartate 245. The glycerol site is built by arginine 84, glutamate 85, tyrosine 136, aspartate 245, and glutamine 246. Threonine 267 and glycine 310 together coordinate ADP. ATP-binding residues include threonine 267, glycine 310, glutamine 314, and glycine 411. ADP contacts are provided by glycine 411 and asparagine 415.

This sequence belongs to the FGGY kinase family.

The catalysed reaction is glycerol + ATP = sn-glycerol 3-phosphate + ADP + H(+). Its pathway is polyol metabolism; glycerol degradation via glycerol kinase pathway; sn-glycerol 3-phosphate from glycerol: step 1/1. With respect to regulation, inhibited by fructose 1,6-bisphosphate (FBP). Functionally, key enzyme in the regulation of glycerol uptake and metabolism. Catalyzes the phosphorylation of glycerol to yield sn-glycerol 3-phosphate. In Nitrosomonas eutropha (strain DSM 101675 / C91 / Nm57), this protein is Glycerol kinase.